The following is a 589-amino-acid chain: Protein sprouty (589 aa).

3 disordered regions span residues 1-37, 102-194, and 239-320; these read MDRR…GVDH, RPSS…RPES, and LHLQ…MGLG. Low complexity-rich tracts occupy residues 104-135 and 148-162; these read SSLS…SSSS and NNSI…INNN. Residues 163 to 172 are compositionally biased toward polar residues; the sequence is FLSHFQSAEP. Residues 239–272 are compositionally biased toward low complexity; that stretch reads LHLQQHQQHLQQQQQQQQQQQQQQHLQHQQNQQH. Polar residues predominate over residues 276–286; that stretch reads ATTTQATSVGS. The SPR domain maps to 380-499; the sequence is RCGRCRCEQC…CYGRFAGRGC (120 aa).

It belongs to the sprouty family. Interacts with DRK and RasGAP1 proteins of the Ras pathway. As to expression, in ovary, expressed from stage 7 of oogenesis in the posterior follicle cells and during stage 9 when the follicle cells migrate posteriorly over the oocyte nucleus, expression is seen in the dorsal and lateral cells and is excluded from the ventral cells. Once the migration of follicle cells is complete expressed in the dorsal-anterior corner of the egg chamber. Expressed in the embryonic tracheal system, developing eye imaginal disk, embryonic chordotonal organ precursors, midline glia and wing imaginal disk.

It localises to the cell membrane. Functionally, inhibitor of tracheal branching that restricts branch budding by antagonizing the BNL-FGF pathway (BNL: branchless, an fgf inducer of branching). Acts as an antagonist of EGFR-mediated signaling in the eye (where it is important for cell determination) midline glia, chordotonal organs, wing and ovarian follicle cells. The chain is Protein sprouty (sty) from Drosophila melanogaster (Fruit fly).